A 347-amino-acid chain; its full sequence is NADH-ubiquinone oxidoreductase chain 2 (347 aa).

10 consecutive transmembrane segments (helical) span residues 13-33 (IFAG…WVGL), 55-75 (AAIK…MAIL), 96-116 (LMIV…FWVP), 123-143 (PLMS…SIMY), 150-170 (NVSL…WGGL), 178-198 (ILAY…PYNP), 201-221 (TILN…LLNL), 247-267 (TLLS…WLII), 277-297 (ITPT…LRLI), and 325-345 (FLPT…FMLM).

It belongs to the complex I subunit 2 family. As to quaternary structure, core subunit of respiratory chain NADH dehydrogenase (Complex I) which is composed of 45 different subunits. Interacts with TMEM242.

The protein resides in the mitochondrion inner membrane. The catalysed reaction is a ubiquinone + NADH + 5 H(+)(in) = a ubiquinol + NAD(+) + 4 H(+)(out). Functionally, core subunit of the mitochondrial membrane respiratory chain NADH dehydrogenase (Complex I) which catalyzes electron transfer from NADH through the respiratory chain, using ubiquinone as an electron acceptor. Essential for the catalytic activity and assembly of complex I. This chain is NADH-ubiquinone oxidoreductase chain 2, found in Gorilla gorilla gorilla (Western lowland gorilla).